Consider the following 356-residue polypeptide: Arginine kinase (356 aa).

Ala2 is subject to N-acetylalanine. One can recognise a Phosphagen kinase N-terminal domain in the interval 9 to 91 (KLEAGFKKLE…FDPIIEDYHV (83 aa)). 64 to 68 (GVGIY) contributes to the L-arginine binding site. The region spanning 119 to 356 (YVISTRVRCG…LELIKMEKEM (238 aa)) is the Phosphagen kinase C-terminal domain. ATP contacts are provided by residues 122-126 (STRVR) and His185. Glu225 contacts L-arginine. Arg229 serves as a coordination point for ATP. Residue Cys271 coordinates L-arginine. Residues 280 to 284 (RASVH) and 309 to 314 (RGTRGE) each bind ATP. Glu314 contacts L-arginine.

It belongs to the ATP:guanido phosphotransferase family.

The catalysed reaction is L-arginine + ATP = N(omega)-phospho-L-arginine + ADP + H(+). The polypeptide is Arginine kinase (Penaeus monodon (Giant tiger prawn)).